The sequence spans 148 residues: Lysozyme C (148 aa).

Positions 1 to 18 are cleaved as a signal peptide; the sequence is MKALIILGLVLLSVMVQA. The 130-residue stretch at 19-148 folds into the C-type lysozyme domain; the sequence is KVFERCELAR…LRQYIQGCGV (130 aa). Disulfide bonds link Cys-24-Cys-146, Cys-48-Cys-134, Cys-83-Cys-99, and Cys-95-Cys-113. Residues Glu-53 and Asp-71 contribute to the active site.

This sequence belongs to the glycosyl hydrolase 22 family. Monomer.

Its subcellular location is the secreted. The enzyme catalyses Hydrolysis of (1-&gt;4)-beta-linkages between N-acetylmuramic acid and N-acetyl-D-glucosamine residues in a peptidoglycan and between N-acetyl-D-glucosamine residues in chitodextrins.. Its function is as follows. Lysozymes have primarily a bacteriolytic function; those in tissues and body fluids are associated with the monocyte-macrophage system and enhance the activity of immunoagents. The protein is Lysozyme C (LYZ) of Hylobates lar (Lar gibbon).